The primary structure comprises 142 residues: uncharacterized protein (142 aa).

The region spanning 18-137 (QSSGYSCGPA…KIFTGNVLVV (120 aa)) is the Peptidase C39 domain.

This is an uncharacterized protein from Methanothermobacter marburgensis (strain ATCC BAA-927 / DSM 2133 / JCM 14651 / NBRC 100331 / OCM 82 / Marburg) (Methanobacterium thermoautotrophicum).